The chain runs to 239 residues: MGRKWNNIKEKKAQKDKNTSRIYAKFGKEIYVAAKSGEPDPESNQNLRLVLERAKTYNVPRNIIDRAIDKAKGSDDENYDNLRYEGFGPNGSMLIVDALTNNVNRTASDVRAAFGKNGGNMGVSGSVSYMFDHTATFAFEGKSADEILEVLMEQDLDVRDVVDDGNLTIVYAEPDQFAQVQDALRQDGVEDFQVAEFEMLPQNDIQLSDEDKATLEGLIDALEDLEDVQNVYHNVDLDS.

It belongs to the TACO1 family. YeeN subfamily.

The protein localises to the cytoplasm. In Staphylococcus carnosus (strain TM300), this protein is Probable transcriptional regulatory protein Sca_0317.